The chain runs to 561 residues: V-type proton ATPase catalytic subunit A (561 aa).

G190–T197 lines the ATP pocket.

It belongs to the ATPase alpha/beta chains family. V-ATPase is a heteromultimeric enzyme composed of a peripheral catalytic V1 complex (main components: subunits A, B, C, D, E, and F) attached to an integral membrane V0 proton pore complex (main component: the proteolipid protein). In terms of tissue distribution, high expression in the mesocotyl tip of etiolated seedlings compared to the base.

The enzyme catalyses ATP + H2O + 4 H(+)(in) = ADP + phosphate + 5 H(+)(out). Functionally, catalytic subunit of the peripheral V1 complex of vacuolar ATPase. V-ATPase vacuolar ATPase is responsible for acidifying a variety of intracellular compartments in eukaryotic cells. The chain is V-type proton ATPase catalytic subunit A from Zea mays (Maize).